The sequence spans 214 residues: Outer-membrane lipoprotein LolB (214 aa).

The N-terminal stretch at 1–25 (MNNLKRLTKTIFSCFTLSALLLLAG) is a signal peptide. C26 is lipidated: N-palmitoyl cysteine. A lipid anchor (S-diacylglycerol cysteine) is attached at C26.

Belongs to the LolB family. In terms of assembly, monomer.

The protein localises to the cell outer membrane. In terms of biological role, plays a critical role in the incorporation of lipoproteins in the outer membrane after they are released by the LolA protein. The sequence is that of Outer-membrane lipoprotein LolB from Shewanella baltica (strain OS155 / ATCC BAA-1091).